Consider the following 306-residue polypeptide: Tyrosine recombinase XerC (306 aa).

The Core-binding (CB) domain maps to methionine 1–tyrosine 90. Residues arginine 111–arginine 298 form the Tyr recombinase domain. Residues arginine 151, lysine 175, histidine 250, arginine 253, and histidine 276 contribute to the active site. Catalysis depends on tyrosine 285, which acts as the O-(3'-phospho-DNA)-tyrosine intermediate.

Belongs to the 'phage' integrase family. XerC subfamily. As to quaternary structure, forms a cyclic heterotetrameric complex composed of two molecules of XerC and two molecules of XerD.

It localises to the cytoplasm. Its function is as follows. Site-specific tyrosine recombinase, which acts by catalyzing the cutting and rejoining of the recombining DNA molecules. The XerC-XerD complex is essential to convert dimers of the bacterial chromosome into monomers to permit their segregation at cell division. It also contributes to the segregational stability of plasmids. The protein is Tyrosine recombinase XerC of Pelotomaculum thermopropionicum (strain DSM 13744 / JCM 10971 / SI).